The following is a 382-amino-acid chain: uncharacterized protein (382 aa).

12 consecutive transmembrane segments (helical) span residues 8–28 (VMLL…LNTL), 45–65 (MVSS…GYLI), 75–95 (YLAS…VGFW), 102–122 (FIAG…LMCS), 131–151 (LLAA…LLVS), 157–177 (LLHV…PLLF), 204–224 (LGVN…GLMP), 231–251 (GMAN…GILG), 270–290 (VQVF…AMAP), 291–311 (ALFI…AWAC), 325–345 (ALLL…AMLM), and 349–369 (SDNL…LMLL).

The protein belongs to the major facilitator superfamily. YcaD (TC 2.A.1.26) family.

The protein localises to the cell inner membrane. This is an uncharacterized protein from Salmonella newport (strain SL254).